Reading from the N-terminus, the 434-residue chain is APETALA2-like protein 2 (434 aa).

The disordered stretch occupies residues 1-116 (MLLDLNVESP…KTRRGPRSRS (116 aa)). The span at 12 to 23 (RSGTSSSSVLNS) shows a compositional bias: low complexity. The span at 25–38 (DAGGGGGGGGGGGL) shows a compositional bias: gly residues. Over residues 72-87 (LPPPPPAAPSPAPAWQ) the composition is skewed to pro residues. Positions 104–113 (VAKKTRRGPR) are enriched in basic residues. The Nuclear localization signal motif lies at 106-115 (KKTRRGPRSR). 2 DNA-binding regions (AP2/ERF) span residues 118 to 174 (QYRG…INFN) and 210 to 267 (KFRG…TNFE). Residues 291–295 (LDLRI) carry the EAR motif.

This sequence belongs to the AP2/ERF transcription factor family. AP2 subfamily. May form homodimer. Interacts with TPR2/ASP1. Highly expressed in developing panicles and in young seedlings. Present at low levels at all developmental stages.

The protein localises to the nucleus. Functionally, probable transcription factor. Involved in spikelet transition. Together with SNB, controls synergistically inflorescence architecture and floral meristem establishment via the regulation of spatio-temporal expression of B- and E-function floral organ identity genes in the lodicules and of spikelet meristem genes. Prevents lemma and palea elongation as well as grain growth. This Oryza sativa subsp. japonica (Rice) protein is APETALA2-like protein 2.